The following is a 548-amino-acid chain: Chaperonin GroEL (548 aa).

Residues 29–32 (TLGP), K50, 86–90 (DGTTT), G416, and D497 contribute to the ATP site.

The protein belongs to the chaperonin (HSP60) family. In terms of assembly, forms a cylinder of 14 subunits composed of two heptameric rings stacked back-to-back. Interacts with the co-chaperonin GroES.

It localises to the cytoplasm. The enzyme catalyses ATP + H2O + a folded polypeptide = ADP + phosphate + an unfolded polypeptide.. Functionally, together with its co-chaperonin GroES, plays an essential role in assisting protein folding. The GroEL-GroES system forms a nano-cage that allows encapsulation of the non-native substrate proteins and provides a physical environment optimized to promote and accelerate protein folding. This is Chaperonin GroEL from Neorickettsia sennetsu (strain ATCC VR-367 / Miyayama) (Ehrlichia sennetsu).